The sequence spans 220 residues: Large ribosomal subunit protein uL16 (220 aa).

Belongs to the universal ribosomal protein uL16 family. As to quaternary structure, component of the large ribosomal subunit. Mature ribosomes consist of a small (40S) and a large (60S) subunit. The 40S subunit contains about 32 different proteins and 1 molecule of RNA (18S). The 60S subunit contains 45 different proteins and 3 molecules of RNA (25S, 5.8S and 5S).

It is found in the cytoplasm. Functionally, component of the ribosome, a large ribonucleoprotein complex responsible for the synthesis of proteins in the cell. The small ribosomal subunit (SSU) binds messenger RNAs (mRNAs) and translates the encoded message by selecting cognate aminoacyl-transfer RNA (tRNA) molecules. The large subunit (LSU) contains the ribosomal catalytic site termed the peptidyl transferase center (PTC), which catalyzes the formation of peptide bonds, thereby polymerizing the amino acids delivered by tRNAs into a polypeptide chain. The nascent polypeptides leave the ribosome through a tunnel in the LSU and interact with protein factors that function in enzymatic processing, targeting, and the membrane insertion of nascent chains at the exit of the ribosomal tunnel. The protein is Large ribosomal subunit protein uL16 of Candida albicans (strain SC5314 / ATCC MYA-2876) (Yeast).